Consider the following 102-residue polypeptide: Small ribosomal subunit protein uS10 (102 aa).

This sequence belongs to the universal ribosomal protein uS10 family. As to quaternary structure, part of the 30S ribosomal subunit.

Involved in the binding of tRNA to the ribosomes. In Thermotoga maritima (strain ATCC 43589 / DSM 3109 / JCM 10099 / NBRC 100826 / MSB8), this protein is Small ribosomal subunit protein uS10.